Here is a 171-residue protein sequence, read N- to C-terminus: Peptide deformylase (171 aa).

The Fe cation site is built by Cys94 and His136. The active site involves Glu137. His140 contacts Fe cation.

This sequence belongs to the polypeptide deformylase family. Requires Fe(2+) as cofactor.

The catalysed reaction is N-terminal N-formyl-L-methionyl-[peptide] + H2O = N-terminal L-methionyl-[peptide] + formate. Its function is as follows. Removes the formyl group from the N-terminal Met of newly synthesized proteins. Requires at least a dipeptide for an efficient rate of reaction. N-terminal L-methionine is a prerequisite for activity but the enzyme has broad specificity at other positions. This chain is Peptide deformylase, found in Afipia carboxidovorans (strain ATCC 49405 / DSM 1227 / KCTC 32145 / OM5) (Oligotropha carboxidovorans).